A 182-amino-acid chain; its full sequence is Glutamyl-tRNA(Gln) amidotransferase subunit F, mitochondrial (182 aa).

The protein belongs to the GatF family. As to quaternary structure, subunit of the heterotrimeric GatFAB amidotransferase (AdT) complex, composed of A, B and F subunits.

It localises to the mitochondrion inner membrane. The catalysed reaction is L-glutamyl-tRNA(Gln) + L-glutamine + ATP + H2O = L-glutaminyl-tRNA(Gln) + L-glutamate + ADP + phosphate + H(+). Its function is as follows. Allows the formation of correctly charged Gln-tRNA(Gln) through the transamidation of misacylated Glu-tRNA(Gln) in the mitochondria. The reaction takes place in the presence of glutamine and ATP through an activated gamma-phospho-Glu-tRNA(Gln). Required for proper protein synthesis within the mitochondrion. The sequence is that of Glutamyl-tRNA(Gln) amidotransferase subunit F, mitochondrial from Candida tropicalis (strain ATCC MYA-3404 / T1) (Yeast).